A 57-amino-acid chain; its full sequence is DNA-directed RNA polymerase subunit Rpo6 (57 aa).

It belongs to the archaeal Rpo6/eukaryotic RPB6 RNA polymerase subunit family. In terms of assembly, part of the RNA polymerase complex.

The protein localises to the cytoplasm. The enzyme catalyses RNA(n) + a ribonucleoside 5'-triphosphate = RNA(n+1) + diphosphate. DNA-dependent RNA polymerase (RNAP) catalyzes the transcription of DNA into RNA using the four ribonucleoside triphosphates as substrates. The chain is DNA-directed RNA polymerase subunit Rpo6 from Pyrococcus abyssi (strain GE5 / Orsay).